Reading from the N-terminus, the 95-residue chain is Pyruvate synthase subunit PorD (95 aa).

4Fe-4S ferredoxin-type domains lie at 34 to 63 (FRPV…PREN) and 64 to 93 (GFFE…MILE). [4Fe-4S] cluster-binding residues include Cys-43, Cys-46, Cys-49, Cys-53, Cys-73, Cys-76, Cys-79, and Cys-83.

In terms of assembly, heterotetramer of one alpha, one beta, one delta and one gamma chain. Requires [4Fe-4S] cluster as cofactor.

This Methanosarcina barkeri (strain Fusaro / DSM 804) protein is Pyruvate synthase subunit PorD (porD).